The chain runs to 753 residues: Photosystem I P700 chlorophyll a apoprotein A1 (753 aa).

The next 8 membrane-spanning stretches (helical) occupy residues 72-95 (IFSAHFGHLAIIFVWLSGAYFHGA), 158-181 (LYCTAIGGLVMAALMMFAGWFHYH), 197-221 (MNHHLAGLLGLGCLSWAGHQIHVSL), 293-311 (TAHHHLALAVLFIVAGHMY), 350-373 (WHAQLAINLAMLGSLSIIVAHHMY), 389-415 (LSLFTHHMWIGGFLIVGAGAHGAIFMV), 437-459 (AIISHLNWVCIFLGFHSFGLYVH), and 534-552 (FMVHHIHAFTIHVTALILL). Cysteine 576 and cysteine 585 together coordinate [4Fe-4S] cluster. The next 2 membrane-spanning stretches (helical) occupy residues 592-613 (HVFLGLFWMYNSLSIVIFHFSW) and 667-689 (LSAYGLLFLGAHFIWAFSLMFLF). Position 678 (histidine 678) interacts with chlorophyll a'. Chlorophyll a-binding residues include methionine 686 and tyrosine 694. Residue tryptophan 695 participates in phylloquinone binding. Residues 727–747 (AVGVAHYLLGGIVTTWAFFLA) form a helical membrane-spanning segment.

This sequence belongs to the PsaA/PsaB family. As to quaternary structure, the PsaA/B heterodimer binds the P700 chlorophyll special pair and subsequent electron acceptors. PSI consists of a core antenna complex that captures photons, and an electron transfer chain that converts photonic excitation into a charge separation. The cyanobacterial PSI reaction center is composed of one copy each of PsaA,B,C,D,E,F,I,J,K,L,M and X, and forms trimeric complexes. It depends on PSI electron transfer chain: 5 chlorophyll a, 1 chlorophyll a', 2 phylloquinones and 3 4Fe-4S clusters. PSI core antenna: 90 chlorophyll a, 22 carotenoids, 3 phospholipids and 1 galactolipid. P700 is a chlorophyll a/chlorophyll a' dimer, A0 is one or more chlorophyll a, A1 is one or both phylloquinones and FX is a shared 4Fe-4S iron-sulfur center. as a cofactor.

The protein resides in the cellular thylakoid membrane. The catalysed reaction is reduced [plastocyanin] + hnu + oxidized [2Fe-2S]-[ferredoxin] = oxidized [plastocyanin] + reduced [2Fe-2S]-[ferredoxin]. Functionally, psaA and PsaB bind P700, the primary electron donor of photosystem I (PSI), as well as the electron acceptors A0, A1 and FX. PSI is a plastocyanin/cytochrome c6-ferredoxin oxidoreductase, converting photonic excitation into a charge separation, which transfers an electron from the donor P700 chlorophyll pair to the spectroscopically characterized acceptors A0, A1, FX, FA and FB in turn. Oxidized P700 is reduced on the lumenal side of the thylakoid membrane by plastocyanin or cytochrome c6. In Trichodesmium erythraeum (strain IMS101), this protein is Photosystem I P700 chlorophyll a apoprotein A1.